Consider the following 245-residue polypeptide: 8-amino-3,8-dideoxy-manno-octulosonate cytidylyltransferase (245 aa).

Belongs to the KdsB family.

It is found in the cytoplasm. It catalyses the reaction 8-amino-3,8-dideoxy-alpha-D-manno-octulosonate + CTP = CMP-8-amino-3,8-dideoxy-alpha-D-manno-oct-2-ulosonate + diphosphate. Its pathway is bacterial outer membrane biogenesis; lipopolysaccharide biosynthesis. In terms of biological role, activates KDO8N (a required 8-carbon sugar) for incorporation into bacterial lipopolysaccharide in the Shewanella genus. The sequence is that of 8-amino-3,8-dideoxy-manno-octulosonate cytidylyltransferase from Shewanella putrefaciens (strain CN-32 / ATCC BAA-453).